We begin with the raw amino-acid sequence, 540 residues long: T-complex protein 1 subunit theta (540 aa).

It belongs to the TCP-1 chaperonin family. In terms of assembly, heterooligomeric complex of about 850 to 900 kDa that forms two stacked rings, 12 to 16 nm in diameter.

It is found in the cytoplasm. Its function is as follows. Molecular chaperone; assists the folding of proteins upon ATP hydrolysis. Known to play a role, in vitro, in the folding of actin and tubulin. In yeast may play a role in mitotic spindle formation. The protein is T-complex protein 1 subunit theta (CCT8) of Candida albicans (Yeast).